Reading from the N-terminus, the 359-residue chain is Probable dual-specificity RNA methyltransferase RlmN (359 aa).

E99 serves as the catalytic Proton acceptor. Positions 105 to 342 (TENRRTACVS…VTIRKSYGTT (238 aa)) constitute a Radical SAM core domain. C112 and C347 are oxidised to a cystine. [4Fe-4S] cluster-binding residues include C119, C123, and C126. S-adenosyl-L-methionine-binding positions include 171–172 (GE), S204, 227–229 (SLH), and N304. The active-site S-methylcysteine intermediate is C347.

The protein belongs to the radical SAM superfamily. RlmN family. The cofactor is [4Fe-4S] cluster.

The protein localises to the cytoplasm. The enzyme catalyses adenosine(2503) in 23S rRNA + 2 reduced [2Fe-2S]-[ferredoxin] + 2 S-adenosyl-L-methionine = 2-methyladenosine(2503) in 23S rRNA + 5'-deoxyadenosine + L-methionine + 2 oxidized [2Fe-2S]-[ferredoxin] + S-adenosyl-L-homocysteine. The catalysed reaction is adenosine(37) in tRNA + 2 reduced [2Fe-2S]-[ferredoxin] + 2 S-adenosyl-L-methionine = 2-methyladenosine(37) in tRNA + 5'-deoxyadenosine + L-methionine + 2 oxidized [2Fe-2S]-[ferredoxin] + S-adenosyl-L-homocysteine. Functionally, specifically methylates position 2 of adenine 2503 in 23S rRNA and position 2 of adenine 37 in tRNAs. This chain is Probable dual-specificity RNA methyltransferase RlmN, found in Pelodictyon phaeoclathratiforme (strain DSM 5477 / BU-1).